A 128-amino-acid polypeptide reads, in one-letter code: Thor profilin (128 aa).

It belongs to the Asgard profilin family.

The protein localises to the cytoplasm. It is found in the cytoskeleton. Its function is as follows. Has no profilin activity against rabbit actin. The chain is Thor profilin from Thorarchaeota archaeon (strain AB_25).